Here is a 294-residue protein sequence, read N- to C-terminus: 33 kDa chaperonin (294 aa).

Disulfide bonds link Cys239–Cys241 and Cys272–Cys275.

The protein belongs to the HSP33 family. In terms of processing, under oxidizing conditions two disulfide bonds are formed involving the reactive cysteines. Under reducing conditions zinc is bound to the reactive cysteines and the protein is inactive.

Its subcellular location is the cytoplasm. In terms of biological role, redox regulated molecular chaperone. Protects both thermally unfolding and oxidatively damaged proteins from irreversible aggregation. Plays an important role in the bacterial defense system toward oxidative stress. In Lacticaseibacillus paracasei (strain ATCC 334 / BCRC 17002 / CCUG 31169 / CIP 107868 / KCTC 3260 / NRRL B-441) (Lactobacillus paracasei), this protein is 33 kDa chaperonin.